Consider the following 1174-residue polypeptide: Male determiner protein Mdmd(II) (1174 aa).

The span at methionine 1–proline 15 shows a compositional bias: basic and acidic residues. Disordered regions lie at residues methionine 1–arginine 51, lysine 80–glutamate 109, and lysine 136–serine 259. A compositionally biased stretch (low complexity) spans serine 16–serine 35. A compositionally biased stretch (polar residues) spans lysine 36 to leucine 47. Over residues lysine 80–serine 92 the composition is skewed to basic and acidic residues. The span at isoleucine 93–aspartate 102 shows a compositional bias: polar residues. The segment covering leucine 138–serine 153 has biased composition (low complexity). Residues histidine 183–asparagine 200 show a composition bias toward basic and acidic residues. The segment covering arginine 201 to glutamate 223 has biased composition (basic residues). A compositionally biased stretch (basic and acidic residues) spans arginine 235–serine 259. Residues lysine 348–glycine 531 enclose the MIF4G domain. Positions aspartate 597 to serine 608 are enriched in low complexity. Residues aspartate 597–aspartate 616 are disordered. The MI domain maps to alanine 641–leucine 757. Positions serine 840–proline 857 are enriched in low complexity. Disordered stretches follow at residues serine 840–lysine 1045 and arginine 1095–arginine 1133. Over residues lysine 869 to lysine 909 the composition is skewed to basic residues. The segment covering arginine 910–leucine 924 has biased composition (basic and acidic residues). Residues serine 926 to aspartate 957 are compositionally biased toward low complexity. Residues lysine 963–lysine 1001 are compositionally biased toward basic residues. The segment covering serine 1010 to serine 1020 has biased composition (low complexity). The span at arginine 1034–lysine 1045 shows a compositional bias: basic residues. The span at arginine 1095 to arginine 1118 shows a compositional bias: basic and acidic residues. Basic residues predominate over residues arginine 1119 to asparagine 1130.

It belongs to the CWC22 family. As to quaternary structure, component of the spliceosome C complex.

It localises to the nucleus speckle. Its function is as follows. Male determiner protein (M-factor) that controls male somatic sexual differentiation. Acts as a dominant factor that regulates the mRNA splicing of transformer (tra) and doublesex (dsx) transcripts and promotes expression of male splice forms of tra and dsx. Probably acts as a component of the spliceosome C complex required for mRNA splicing factor and exon-junction complex (EJC) assembly. Hinders eIF4AIII from non-specifically binding RNA and escorts it to the splicing machinery to promote EJC assembly on mature mRNAs. The polypeptide is Male determiner protein Mdmd(II) (Musca domestica (House fly)).